Reading from the N-terminus, the 307-residue chain is Elongation factor Ts (307 aa).

An involved in Mg(2+) ion dislocation from EF-Tu region spans residues 80–83 (TDFV).

The protein belongs to the EF-Ts family.

The protein localises to the cytoplasm. Associates with the EF-Tu.GDP complex and induces the exchange of GDP to GTP. It remains bound to the aminoacyl-tRNA.EF-Tu.GTP complex up to the GTP hydrolysis stage on the ribosome. The chain is Elongation factor Ts from Albidiferax ferrireducens (strain ATCC BAA-621 / DSM 15236 / T118) (Rhodoferax ferrireducens).